The primary structure comprises 72 residues: N-alpha-acetyltransferase 38, NatC auxiliary subunit (72 aa).

In terms of domain architecture, Sm spans 3–72 (NGEILLTSWL…KHIKSFSVRA (70 aa)).

Component of the N-terminal acetyltransferase C (NatC) complex, composed of the catalytic subunit Naa30, a large auxiliary subunit Naa35 and a small auxiliary subunit Naa38.

The protein localises to the endoplasmic reticulum. Its function is as follows. Component of the NatC N-terminal acetyltransferase, which associates with the ribosome to acetylate nascent protein chains in a cotranslational manner. NatC acetylates protein N-termini starting with methionine, followed by a hydrophobic or amphipathic amino acid, with amino acids at positions 3 and 4 also contributing to NatC recognition. The first 4 amino acids of cognate substrates are recognized at the Naa30-Naa35 interface. NatC-dependent acetylation targets various substrate proteins to specific subcellular sites. This is N-alpha-acetyltransferase 38, NatC auxiliary subunit (naa38) from Schizosaccharomyces pombe (strain 972 / ATCC 24843) (Fission yeast).